Reading from the N-terminus, the 366-residue chain is uncharacterized protein (366 aa).

This is an uncharacterized protein from Caenorhabditis elegans.